We begin with the raw amino-acid sequence, 427 residues long: Glutamate-1-semialdehyde 2,1-aminomutase (427 aa).

K265 is subject to N6-(pyridoxal phosphate)lysine.

The protein belongs to the class-III pyridoxal-phosphate-dependent aminotransferase family. HemL subfamily. As to quaternary structure, homodimer. It depends on pyridoxal 5'-phosphate as a cofactor.

It is found in the cytoplasm. It carries out the reaction (S)-4-amino-5-oxopentanoate = 5-aminolevulinate. Its pathway is porphyrin-containing compound metabolism; protoporphyrin-IX biosynthesis; 5-aminolevulinate from L-glutamyl-tRNA(Glu): step 2/2. The sequence is that of Glutamate-1-semialdehyde 2,1-aminomutase from Neisseria meningitidis serogroup A / serotype 4A (strain DSM 15465 / Z2491).